The following is a 319-amino-acid chain: Glycine--tRNA ligase alpha subunit (319 aa).

It belongs to the class-II aminoacyl-tRNA synthetase family. As to quaternary structure, tetramer of two alpha and two beta subunits.

Its subcellular location is the cytoplasm. It catalyses the reaction tRNA(Gly) + glycine + ATP = glycyl-tRNA(Gly) + AMP + diphosphate. The polypeptide is Glycine--tRNA ligase alpha subunit (Coxiella burnetii (strain CbuK_Q154) (Coxiella burnetii (strain Q154))).